A 633-amino-acid polypeptide reads, in one-letter code: ATP-dependent RNA helicase mrh4, mitochondrial (633 aa).

A mitochondrion-targeting transit peptide spans 1-38 (MNRLGRLSLPLRPQVCLLCQTQATMSSPLAGWQAVRSM). The tract at residues 50-115 (MVLSSNVDKS…KQKPDSPLYK (66 aa)) is disordered. Over residues 52 to 63 (LSSNVDKSSLKQ) the composition is skewed to polar residues. A compositionally biased stretch (basic and acidic residues) spans 98–109 (RSGDSEDDKQKP). Positions 142-175 (SSFDQFPLLPVVRHSISSQALSRTGDIVPTPIQR) match the Q motif motif. Positions 195 to 407 (SDHEPNFEQY…RKRYPDIRRL (213 aa)) constitute a Helicase ATP-binding domain. ATP is bound at residue 208–215 (AETGSGKT). The DEAD box motif lies at 354-357 (DEAD). Positions 458–633 (FLAQAGPKVK…EGMFRGQALI (176 aa)) constitute a Helicase C-terminal domain.

It belongs to the DEAD box helicase family. MRH4 subfamily.

Its subcellular location is the mitochondrion. It catalyses the reaction ATP + H2O = ADP + phosphate + H(+). In terms of biological role, ATP-binding RNA helicase involved in mitochondrial RNA metabolism. Required for maintenance of mitochondrial DNA. The chain is ATP-dependent RNA helicase mrh4, mitochondrial (mrh4) from Aspergillus niger (strain ATCC MYA-4892 / CBS 513.88 / FGSC A1513).